A 142-amino-acid chain; its full sequence is Relaxin-3 (142 aa).

The N-terminal stretch at 1–25 (MARYMLLLLLAVWVLTGELWPGAEA) is a signal peptide. 3 cysteine pairs are disulfide-bonded: cysteine 35–cysteine 129, cysteine 47–cysteine 142, and cysteine 128–cysteine 133. A propeptide spans 55 to 118 (SDILAHEAMG…GTPGVLRGSR (64 aa)) (connecting peptide).

This sequence belongs to the insulin family. In terms of assembly, heterodimer of a B chain and an A chain linked by two disulfide bonds.

The protein resides in the secreted. In terms of biological role, may play a role in neuropeptide signaling processes. Ligand for LGR7, RXFP3 and RXFP4. The protein is Relaxin-3 (RLN3) of Homo sapiens (Human).